The primary structure comprises 113 residues: ATP-dependent Clp protease adapter protein ClpS (113 aa).

The protein belongs to the ClpS family. Binds to the N-terminal domain of the chaperone ClpA.

Functionally, involved in the modulation of the specificity of the ClpAP-mediated ATP-dependent protein degradation. The polypeptide is ATP-dependent Clp protease adapter protein ClpS (Leptospira biflexa serovar Patoc (strain Patoc 1 / Ames)).